The sequence spans 832 residues: Protein monoglycylase TTLL8 (832 aa).

A compositionally biased stretch (pro residues) spans 1–13 (MSCPPTPNPPFRP). Disordered regions lie at residues 1 to 84 (MSCP…QDLS) and 277 to 304 (GKSK…KLPS). Composition is skewed to basic and acidic residues over residues 46–59 (QLRE…ERKK), 66–75 (DGDHKEENKL), and 280–299 (KKEE…ENPD). Residues 271–624 (YCSKVKGKSK…RKLDRNCDIG (354 aa)) enclose the TTL domain. ATP contacts are provided by residues Lys397, 403–404 (RG), 435–438 (QKYI), 448–450 (KFD), and 492–493 (CN). Arg403 contributes to the a protein binding site. Residue Ser495 participates in L-glutamate binding. The Mg(2+) site is built by Asp570, Glu583, and Asn585. Glu583 serves as a coordination point for ATP.

Requires Mg(2+) as cofactor. As to expression, highly expressed in testis. Expressed in brain, heart, kidney, liver, lung, muscle, spleen and trachea. Expressed in sperm flagellum. In the brain, specifically expressed in ependymal cilia.

It localises to the cytoplasm. The protein localises to the cytoskeleton. It is found in the cell projection. The protein resides in the cilium. Its subcellular location is the cilium axoneme. It localises to the flagellum axoneme. It carries out the reaction L-glutamyl-[protein] + glycine + ATP = glycyl-L-glutamyl-[protein] + ADP + phosphate + H(+). Its function is as follows. Monoglycylase which modifies both tubulin and non-tubulin proteins, adding a single glycine on the gamma-carboxyl groups of specific glutamate residues to generate monoglycine side chains within the C-terminal tail of target proteins. Not involved in elongation step of the polyglycylation reaction. Preferentially monoglycylates alpha-tubulin over beta-tubulin. Together with TTLL3, mediates microtubule glycylation of primary and motile cilia, which is essential for their stability and maintenance. Together with TTLL3, glycylates sperm flagella which regulates axonemal dynein motor activity, thereby controlling flagellar beat, directional sperm swimming and male fertility. Monoglycylates non-tubulin proteins such as ANP32A, ANP32B, SET, NCL and NAP1. This is Protein monoglycylase TTLL8 from Mus musculus (Mouse).